Reading from the N-terminus, the 209-residue chain is Putative thymidylate synthase (209 aa).

Cys-137 is a catalytic residue.

The protein belongs to the thymidylate synthase family. Archaeal-type ThyA subfamily. As to quaternary structure, monomer.

Its subcellular location is the cytoplasm. It functions in the pathway pyrimidine metabolism; dTTP biosynthesis. May catalyze the biosynthesis of dTMP using an unknown cosubstrate. The protein is Putative thymidylate synthase of Methanopyrus kandleri (strain AV19 / DSM 6324 / JCM 9639 / NBRC 100938).